Consider the following 111-residue polypeptide: uncharacterized protein (111 aa).

The helical transmembrane segment at Thr60–Phe80 threads the bilayer.

It localises to the mitochondrion membrane. This is an uncharacterized protein from Arabidopsis thaliana (Mouse-ear cress).